The following is an 875-amino-acid chain: Probable ATP-dependent RNA helicase DDX10 (875 aa).

The disordered stretch occupies residues 1–43 (MGKTANSPGSGARPDPVRSFNRWKKKHSHRQNKKKQLRKQLKK). The residue at position 4 (threonine 4) is a Phosphothreonine. Phosphoserine is present on serine 7. Residues 21–41 (NRWKKKHSHRQNKKKQLRKQL) show a composition bias toward basic residues. The Q motif motif lies at 69 to 97 (TRFSDFPLSKKTLKGLQEAQYRLVTEIQK). Residues 89-91 (YRL), glutamine 96, and 113-120 (AKTGSGKT) each bind ATP. The region spanning 100–274 (IGLALQGKDV…RLSLKNPEYV (175 aa)) is the Helicase ATP-binding domain. A DEAD box motif is present at residues 222–225 (DEAD). A Helicase C-terminal domain is found at 287-448 (TLEQNYIVCE…EIKINPEKLI (162 aa)). A Phosphoserine modification is found at serine 539. Position 555 is an N6-acetyllysine (lysine 555). The tract at residues 562–631 (GGKRLEGTEH…QFLDRDEEEE (70 aa)) is disordered. Basic and acidic residues predominate over residues 564–575 (KRLEGTEHRQDN). Threonine 577 bears the Phosphothreonine mark. A compositionally biased stretch (acidic residues) spans 577 to 593 (TGNEEQEEEEDDEEEME). The span at 603-613 (QAPSLPNTSEA) shows a compositional bias: polar residues. Lysine 649 participates in a covalent cross-link: Glycyl lysine isopeptide (Lys-Gly) (interchain with G-Cter in SUMO2). Residues 703-850 (MQKSAIKDAE…HNRKKARWDT (148 aa)) form a disordered region. Basic and acidic residues predominate over residues 727 to 741 (ERLQEEDKFDKEEYR). Over residues 742–751 (KKIKAKHREK) the composition is skewed to basic residues. Basic and acidic residues predominate over residues 752–771 (RLKEREARREANKRQAKAKD). The span at 772–790 (EEEAFLDWSDDDDDDDDGF) shows a compositional bias: acidic residues. Serine 780 bears the Phosphoserine mark. Over residues 812 to 821 (MENKISDTKK) the composition is skewed to basic and acidic residues. Serine 831 is subject to Phosphoserine.

Belongs to the DEAD box helicase family. DDX10/DBP4 subfamily. As to quaternary structure, interacts with AIM2; this interaction promotes AIM2 stability. Interacts with SCNA; this interaction causes DDX10 mislocalization to the nucleoplasm and cytoplasmic inclusions. As to expression, high in testis but widely expressed.

The protein localises to the cytoplasm. It is found in the nucleus. The protein resides in the nucleolus. The catalysed reaction is ATP + H2O = ADP + phosphate + H(+). Functionally, putative ATP-dependent RNA helicase that plays various role in innate immunity or inflammation. Plays a role in the enhancement of AIM2-induced inflammasome activation by interacting with AIM2 and stabilizing its protein level. Negatively regulates viral infection by promoting interferon beta production and interferon stimulated genes/ISGs expression. This Homo sapiens (Human) protein is Probable ATP-dependent RNA helicase DDX10 (DDX10).